The sequence spans 149 residues: Transcriptional repressor NrdR (149 aa).

Residues 3-34 fold into a zinc finger; the sequence is CPFCFAVDTKVIDSRLVGGGSSVRRRRQCLVC. The ATP-cone domain occupies 49-139; the sequence is PRVVKSNDVR…VYRSFEDIKE (91 aa).

It belongs to the NrdR family. Requires Zn(2+) as cofactor.

Its function is as follows. Negatively regulates transcription of bacterial ribonucleotide reductase nrd genes and operons by binding to NrdR-boxes. This is Transcriptional repressor NrdR from Shigella boydii serotype 18 (strain CDC 3083-94 / BS512).